The primary structure comprises 358 residues: B3 domain-containing transcription factor NGA3 (358 aa).

Residues 1–14 (MDLSLAPTTTTSSD) show a composition bias toward polar residues. The segment at 1-45 (MDLSLAPTTTTSSDQEQDRDQELTSNIGASSSSGPSGNNNNLPMM) is disordered. Residues 25–45 (SNIGASSSSGPSGNNNNLPMM) are compositionally biased toward low complexity. The segment at residues 56–162 (FDKVVTPSDV…KLYIDWRHRP (107 aa)) is a DNA-binding region (TF-B3). Residues 310 to 358 (EIGASSSSSSALRLNLSTDHDDDNDDGDDGDDDQFAKKGKSSLSLNFNP) form a disordered region. Residues 329–342 (HDDDNDDGDDGDDD) show a composition bias toward acidic residues.

The protein localises to the nucleus. Its function is as follows. Regulates lateral organ growth. Functionally redundant with NGA1, NGA2 and NGA4. This chain is B3 domain-containing transcription factor NGA3 (NGA3), found in Arabidopsis thaliana (Mouse-ear cress).